We begin with the raw amino-acid sequence, 552 residues long: CTP synthase (552 aa).

Residues 1–270 (MTKYVFVTGG…DRIICEELKL (270 aa)) form an amidoligase domain region. Ser13 is a binding site for CTP. Residue Ser13 coordinates UTP. ATP is bound by residues 14-19 (SLGKGI) and Asp71. Residues Asp71 and Glu144 each coordinate Mg(2+). CTP is bound by residues 151–153 (DIE), 191–196 (KTKPTQ), and Lys227. Residues 191 to 196 (KTKPTQ) and Lys227 each bind UTP. The region spanning 295–547 (TIGMVGKYVD…VEAAFANKQA (253 aa)) is the Glutamine amidotransferase type-1 domain. Gly356 serves as a coordination point for L-glutamine. The active-site Nucleophile; for glutamine hydrolysis is Cys383. Residues 384–387 (LGMQ), Glu407, and Arg473 each bind L-glutamine. Catalysis depends on residues His520 and Glu522.

Belongs to the CTP synthase family. Homotetramer.

It catalyses the reaction UTP + L-glutamine + ATP + H2O = CTP + L-glutamate + ADP + phosphate + 2 H(+). The enzyme catalyses L-glutamine + H2O = L-glutamate + NH4(+). The catalysed reaction is UTP + NH4(+) + ATP = CTP + ADP + phosphate + 2 H(+). Its pathway is pyrimidine metabolism; CTP biosynthesis via de novo pathway; CTP from UDP: step 2/2. Allosterically activated by GTP, when glutamine is the substrate; GTP has no effect on the reaction when ammonia is the substrate. The allosteric effector GTP functions by stabilizing the protein conformation that binds the tetrahedral intermediate(s) formed during glutamine hydrolysis. Inhibited by the product CTP, via allosteric rather than competitive inhibition. In terms of biological role, catalyzes the ATP-dependent amination of UTP to CTP with either L-glutamine or ammonia as the source of nitrogen. Regulates intracellular CTP levels through interactions with the four ribonucleotide triphosphates. The protein is CTP synthase of Burkholderia ambifaria (strain ATCC BAA-244 / DSM 16087 / CCUG 44356 / LMG 19182 / AMMD) (Burkholderia cepacia (strain AMMD)).